Reading from the N-terminus, the 190-residue chain is Potassium-transporting ATPase KdpC subunit (190 aa).

A helical transmembrane segment spans residues 13-33; sequence VGFLLLTLVCGVVYPGIVTII.

This sequence belongs to the KdpC family. As to quaternary structure, the system is composed of three essential subunits: KdpA, KdpB and KdpC.

It localises to the cell membrane. Functionally, part of the high-affinity ATP-driven potassium transport (or Kdp) system, which catalyzes the hydrolysis of ATP coupled with the electrogenic transport of potassium into the cytoplasm. This subunit acts as a catalytic chaperone that increases the ATP-binding affinity of the ATP-hydrolyzing subunit KdpB by the formation of a transient KdpB/KdpC/ATP ternary complex. The polypeptide is Potassium-transporting ATPase KdpC subunit (Listeria welshimeri serovar 6b (strain ATCC 35897 / DSM 20650 / CCUG 15529 / CIP 8149 / NCTC 11857 / SLCC 5334 / V8)).